Here is a 69-residue protein sequence, read N- to C-terminus: Sperm protamine P1 (69 aa).

Residues 1–69 form a disordered region; sequence MASYRNSRSR…RKRNNNTENK (69 aa). Basic residues-rich tracts occupy residues 7 to 25 and 34 to 63; these read SRSRSRSRFRRRRRGRSRV and RSSRRRRRGKGRAHSGKKGRRSGSRRRKRN.

Belongs to the protamine P1 family. Testis.

The protein resides in the nucleus. Its subcellular location is the chromosome. Functionally, protamines substitute for histones in the chromatin of sperm during the haploid phase of spermatogenesis. They compact sperm DNA into a highly condensed, stable and inactive complex. In Perameles gunnii (Eastern barred bandicoot), this protein is Sperm protamine P1 (PRM1).